Here is a 508-residue protein sequence, read N- to C-terminus: UDP-N-acetylmuramyl-tripeptide synthetase (508 aa).

Ser-35 is a binding site for UDP-N-acetyl-alpha-D-muramoyl-L-alanyl-D-glutamate. ATP is bound at residue 118–124 (GTDGKSS). UDP-N-acetyl-alpha-D-muramoyl-L-alanyl-D-glutamate-binding positions include 163-164 (ST), Thr-190, and Arg-200. N6-carboxylysine is present on Lys-232.

This sequence belongs to the MurCDEF family. MurE subfamily. Post-translationally, carboxylation is probably crucial for Mg(2+) binding and, consequently, for the gamma-phosphate positioning of ATP.

The protein resides in the cytoplasm. It functions in the pathway cell wall biogenesis; peptidoglycan biosynthesis. In terms of biological role, catalyzes the addition of an amino acid to the nucleotide precursor UDP-N-acetylmuramoyl-L-alanyl-D-glutamate (UMAG) in the biosynthesis of bacterial cell-wall peptidoglycan. This chain is UDP-N-acetylmuramyl-tripeptide synthetase, found in Borrelia garinii subsp. bavariensis (strain ATCC BAA-2496 / DSM 23469 / PBi) (Borreliella bavariensis).